A 101-amino-acid polypeptide reads, in one-letter code: Urease subunit beta (101 aa).

The protein belongs to the urease beta subunit family. Heterotrimer of UreA (gamma), UreB (beta) and UreC (alpha) subunits. Three heterotrimers associate to form the active enzyme.

The protein localises to the cytoplasm. It catalyses the reaction urea + 2 H2O + H(+) = hydrogencarbonate + 2 NH4(+). It functions in the pathway nitrogen metabolism; urea degradation; CO(2) and NH(3) from urea (urease route): step 1/1. In Thermosynechococcus vestitus (strain NIES-2133 / IAM M-273 / BP-1), this protein is Urease subunit beta.